We begin with the raw amino-acid sequence, 305 residues long: Taste receptor type 2 member 13 (305 aa).

Residues 1–7 are Extracellular-facing; it reads MGSNVYG. A helical transmembrane segment spans residues 8–28; the sequence is ILTMVMIAEFVFGNMSNGFIV. Residues 29–43 are Cytoplasmic-facing; sequence LINCIDWVRKGTLSS. The chain crosses the membrane as a helical span at residues 44–64; it reads IGWILLFLAISRMVLIWEMLI. The Extracellular segment spans residues 65 to 88; that stretch reads TWIKYMKYSFSFVTGTELRGIMFT. A helical transmembrane segment spans residues 89–109; the sequence is WVISNHFSLWLATILSIFYLL. Over 110–128 the chain is Cytoplasmic; the sequence is KIASFSKPVFLYLKWREKK. A helical transmembrane segment spans residues 129–149; sequence VLLIVLLGNLIFLMLNILQIN. Over 150-182 the chain is Extracellular; the sequence is KHIEHWMYQYERNITWSSRVSDFAGFSNLVLLE. N-linked (GlcNAc...) asparagine glycosylation occurs at N162. A helical transmembrane segment spans residues 183–203; sequence MIVFSVTPFTVALVSFILLIF. At 204–232 the chain is on the cytoplasmic side; sequence SLWKHLQKMHLNSRGERDPSTKAHVNALR. A helical membrane pass occupies residues 233–253; that stretch reads IMVSFLLLYATYFISFFLSLI. Residues 254–262 are Extracellular-facing; that stretch reads PMAHKTRLG. The chain crosses the membrane as a helical span at residues 263-283; that stretch reads LMFSITVGLFYPSSHSFILIL. The Cytoplasmic segment spans residues 284–305; it reads GHSNLRQASLWVMTYLKCGQKH.

It belongs to the G-protein coupled receptor T2R family.

The protein localises to the cell membrane. Functionally, receptor that may play a role in the perception of bitterness and is gustducin-linked. May play a role in sensing the chemical composition of the gastrointestinal content. The activity of this receptor may stimulate alpha gustducin, mediate PLC-beta-2 activation and lead to the gating of TRPM5. The chain is Taste receptor type 2 member 13 from Mus musculus (Mouse).